A 386-amino-acid polypeptide reads, in one-letter code: MTVASMLSSNSMNVGVSNPKMSSKTSACCLLNRPWPSSCSMSISSCGQFGVSEKSKLLCGAGALQVESAPLFSVGQKFQLDDVIEAQQFDRETLSAIFEVARSMENIRGNSSGSQMLKGYLMATLFYEPSTRTRLSFESAMKRLGGDVLTTENAREFSSAAKGETLEDTIRTVEGYSDIIVLRHFESGAARRAAATANIPVINAGDGPGQHPSQALLDVYTIEREIGKLDGIKVGLVGDLANGRTVRSLAYLLAKYRDVKLYFVSPNVVKMKDDIKEYLTSKGVEWEESSDLMEVASKCDVVYQTRIQKERFGEKLNLYEEARGKYIVNQDVLKVMQNHAVVMHPLPKLDEIEADVDNDPRAAYFRQAKNGLYIRMALLKVLLLGW.

The transit peptide at 1-39 directs the protein to the chloroplast; the sequence is MTVASMLSSNSMNVGVSNPKMSSKTSACCLLNRPWPSSC. Carbamoyl phosphate contacts are provided by R132 and T133. The UMP site is built by R132 and T133. Residue K162 coordinates L-aspartate. Carbamoyl phosphate-binding residues include R183, H211, and Q214. The UMP site is built by R183 and H211. UMP is bound by residues R244 and R306. The L-aspartate site is built by R244 and R306. Residues L346 and P347 each coordinate carbamoyl phosphate.

It belongs to the aspartate/ornithine carbamoyltransferase superfamily. ATCase family. As to quaternary structure, homotrimer.

The protein localises to the plastid. It is found in the chloroplast. The enzyme catalyses carbamoyl phosphate + L-aspartate = N-carbamoyl-L-aspartate + phosphate + H(+). It participates in pyrimidine metabolism; UMP biosynthesis via de novo pathway; (S)-dihydroorotate from bicarbonate: step 2/3. Its activity is regulated as follows. Feedback inhibited by UMP. Catalyzes the condensation of carbamoyl phosphate and aspartate to form carbamoyl aspartate and inorganic phosphate, the committed step in the de novo pyrimidine nucleotide biosynthesis pathway. This Pisum sativum (Garden pea) protein is Aspartate carbamoyltransferase 1, chloroplastic (PYRB1).